A 224-amino-acid chain; its full sequence is CDP-diacylglycerol--inositol 3-phosphatidyltransferase (224 aa).

At 1 to 8 the chain is on the cytoplasmic side; sequence MTIAEHDN. A helical membrane pass occupies residues 9 to 29; sequence VFIFVPNLIGYARIVLALIAF. Residues 30–35 are Lumenal-facing; it reads WFMSTN. The helical transmembrane segment at 36–52 threads the bilayer; the sequence is YVISGWCYVTSALLDAV. Mg(2+) is bound by residues Asp-50 and Asp-53. The Cytoplasmic portion of the chain corresponds to 53–76; the sequence is DGQAARAFNQSTRFGAMLDQLTDR. The a CDP-1,2-diacyl-sn-glycerol site is built by Gly-54, Arg-58, and Thr-64. 2 residues coordinate Mg(2+): Asp-71 and Asp-75. The active-site Proton acceptor is Asp-75. The chain crosses the membrane as a helical span at residues 77-97; the sequence is CGTTGLLVTLAYFYPRYMFWF. Residue Gln-98 is a topological domain, lumenal. A helical membrane pass occupies residues 99 to 119; the sequence is LSIAIDVACHWLFMQTSVVVG. Residues 120–138 lie on the Cytoplasmic side of the membrane; that stretch reads RSSHKVNDNFIMRLYYQKD. The chain crosses the membrane as a helical span at residues 139-159; the sequence is ILTFMCCVNELFYVCLYLLHF. Residues 160–163 are Lumenal-facing; sequence TYGP. Residues 164 to 184 form a helical membrane-spanning segment; that stretch reads LIFGASLFKILAFLTGPFAVL. Topologically, residues 185–224 are cytoplasmic; sequence KALISVMHAYVAGIDLAAVDVRERQERRQKSEPVSGKKVE.

This sequence belongs to the CDP-alcohol phosphatidyltransferase class-I family. Mn(2+) serves as cofactor. It depends on Mg(2+) as a cofactor. In adults, expression is higher in the head than in the body (at protein level).

Its subcellular location is the apical cell membrane. It is found in the lateral cell membrane. It carries out the reaction a CDP-1,2-diacyl-sn-glycerol + myo-inositol = a 1,2-diacyl-sn-glycero-3-phospho-(1D-myo-inositol) + CMP + H(+). Catalyzes the biosynthesis of phosphatidylinositol (PtdIns) as well as PtdIns:inositol exchange reaction. May thus act to reduce an excessive cellular PtdIns content. The exchange activity is due to the reverse reaction of PtdIns synthase and is dependent on CMP, which is tightly bound to the enzyme. Required for the regeneration of the signaling molecule phosphatidylinositol 4,5-bisphosphate (PtdInsP2) from phosphatidic acid (PA) and maintenance of its steady supply during signaling, thus playing an essential role during phospholipase C-mediated transduction. This function is essential in photoreceptors for light-activated recycling of PtdInsP2 during phototransduction. As a key enzyme of the phosphoinositide pathway, indirectly involved in the polarized secretion of basal membrane (BM) proteins in follicle epithelial (FE) cells through promoting PtdInsP2 synthesis in the apical and lateral plasma membranes of FE cells. PtdInsP2 controls the localization of Crag and perhaps the localization and expression of strat, both of which are essential for restricting the secretion of BM proteins to the basal surface. The protein is CDP-diacylglycerol--inositol 3-phosphatidyltransferase of Drosophila melanogaster (Fruit fly).